The following is a 183-amino-acid chain: Putative manganese efflux pump MntP (183 aa).

The next 6 membrane-spanning stretches (helical) occupy residues 8–28 (IIAL…VALG), 40–60 (FYIG…GMAV), 72–92 (ATYA…IASF), 108–128 (LFFA…LGIF), 133–153 (MVTI…GLFV), and 163–183 (SYSE…LLFL).

The protein belongs to the MntP (TC 9.B.29) family.

It localises to the cell membrane. In terms of biological role, probably functions as a manganese efflux pump. The chain is Putative manganese efflux pump MntP from Geobacillus kaustophilus (strain HTA426).